The sequence spans 189 residues: MTLRVLGVDPGLTRCGIGVVDIEKNRRATMVAVGVVGTSAELTLDKRLLVIAQAIDEWLDRHEPDVVAVERVFSQMNVSTVMGVAQASGVVIAAAARRGIPVALHTPSEVKAAVTGSGTANKDAVTKLVTKILRLDAPPKPADAADALALALTHAWRAGSGMGAASGNSSLTPAQKAWADAEAKARRKR.

Residues Asp-9, Glu-70, and Asp-143 contribute to the active site. Residues Asp-9, Glu-70, and Asp-143 each contribute to the Mg(2+) site. Over residues 162 to 178 (MGAASGNSSLTPAQKAW) the composition is skewed to low complexity. Positions 162 to 189 (MGAASGNSSLTPAQKAWADAEAKARRKR) are disordered. Residues 179–189 (ADAEAKARRKR) show a composition bias toward basic and acidic residues.

It belongs to the RuvC family. Homodimer which binds Holliday junction (HJ) DNA. The HJ becomes 2-fold symmetrical on binding to RuvC with unstacked arms; it has a different conformation from HJ DNA in complex with RuvA. In the full resolvosome a probable DNA-RuvA(4)-RuvB(12)-RuvC(2) complex forms which resolves the HJ. Mg(2+) serves as cofactor.

Its subcellular location is the cytoplasm. It carries out the reaction Endonucleolytic cleavage at a junction such as a reciprocal single-stranded crossover between two homologous DNA duplexes (Holliday junction).. In terms of biological role, the RuvA-RuvB-RuvC complex processes Holliday junction (HJ) DNA during genetic recombination and DNA repair. Endonuclease that resolves HJ intermediates. Cleaves cruciform DNA by making single-stranded nicks across the HJ at symmetrical positions within the homologous arms, yielding a 5'-phosphate and a 3'-hydroxyl group; requires a central core of homology in the junction. The consensus cleavage sequence is 5'-(A/T)TT(C/G)-3'. Cleavage occurs on the 3'-side of the TT dinucleotide at the point of strand exchange. HJ branch migration catalyzed by RuvA-RuvB allows RuvC to scan DNA until it finds its consensus sequence, where it cleaves and resolves the cruciform DNA. The polypeptide is Crossover junction endodeoxyribonuclease RuvC (Paenarthrobacter aurescens (strain TC1)).